The primary structure comprises 136 residues: General odorant-binding protein 57e (136 aa).

The first 20 residues, 1–20 (MLDQLTLCLLLNFLCANVLA), serve as a signal peptide directing secretion. 3 cysteine pairs are disulfide-bonded: Cys-28/Cys-61, Cys-57/Cys-109, and Cys-98/Cys-118.

It belongs to the PBP/GOBP family.

Its function is as follows. Present in the aqueous fluid surrounding olfactory sensory dendrites and are thought to aid in the capture and transport of hydrophobic odorants into and through this fluid. This Drosophila melanogaster (Fruit fly) protein is General odorant-binding protein 57e.